A 258-amino-acid chain; its full sequence is Chymotrypsin-like elastase family member 1 (258 aa).

An N-terminal signal peptide occupies residues 1 to 8 (MLVLYGHS). The propeptide at 9–18 (TQDVPETNAR) is activation peptide. The region spanning 19 to 256 (VVGGTEARRN…YITWINNVIA (238 aa)) is the Peptidase S1 domain. Cysteines 48 and 64 form a disulfide. The Charge relay system role is filled by His63. Ca(2+)-binding residues include Glu77, Asn79, Gln82, and Glu87. The N-linked (GlcNAc...) asparagine glycan is linked to Asn79. Asp111 functions as the Charge relay system in the catalytic mechanism. Cystine bridges form between Cys145–Cys212, Cys176–Cys192, and Cys202–Cys232. Ser206 serves as the catalytic Charge relay system. A glycan (N-linked (GlcNAc...) asparagine) is linked at Asn233.

Belongs to the peptidase S1 family. Elastase subfamily. Requires Ca(2+) as cofactor.

Its subcellular location is the secreted. It catalyses the reaction Hydrolysis of proteins, including elastin. Preferential cleavage: Ala-|-Xaa.. Functionally, serine proteases that hydrolyze many proteins in addition to elastin. The chain is Chymotrypsin-like elastase family member 1 (CELA1) from Canis lupus familiaris (Dog).